Consider the following 607-residue polypeptide: UvrABC system protein C (607 aa).

One can recognise a GIY-YIG domain in the interval 11–89 (CKPGVYRFED…IKEFAPPCNV (79 aa)). In terms of domain architecture, UVR spans 201–236 (SSLLESLKKKMLKASKNKEYEEAAILRDKIQAAQTV).

This sequence belongs to the UvrC family. In terms of assembly, interacts with UvrB in an incision complex.

It localises to the cytoplasm. In terms of biological role, the UvrABC repair system catalyzes the recognition and processing of DNA lesions. UvrC both incises the 5' and 3' sides of the lesion. The N-terminal half is responsible for the 3' incision and the C-terminal half is responsible for the 5' incision. The chain is UvrABC system protein C from Tropheryma whipplei (strain Twist) (Whipple's bacillus).